The chain runs to 248 residues: HTH-type transcriptional regulator GgaR (248 aa).

One can recognise an HTH gntR-type domain in the interval Thr-22–Ile-90. A DNA-binding region (H-T-H motif) is located at residues Glu-50–Gln-69.

With respect to regulation, senses ADP-glucose (ADPG), which is the substrate for glycogen elongation, as an effector. In the presence of ADPG, GgaR becomes inactive and derepresses the yegTUV operon, leading to glycogen accumulation. In contrast, in the absence of glucose, the concentration of ADPG decreases, GgaR becomes active, and glycogen accumulation is repressed. Transcriptional regulator that regulates glycogen accumulation in response to the amount of glucose available to the cell. Acts as a repressor of the yegTUV operon, which may be involved in glycogen accumulation. The sequence is that of HTH-type transcriptional regulator GgaR from Escherichia coli O6:H1 (strain CFT073 / ATCC 700928 / UPEC).